A 398-amino-acid chain; its full sequence is Lysophospholipid acyltransferase LPEAT1 (398 aa).

Residues 1-24 (MESELKDLNSNSNPPSSKEDRPLL) are disordered. Residue S28 is modified to Phosphoserine. A helical transmembrane segment spans residues 66–86 (LAVALVTLVPLRFLLSMSILL). The disordered stretch occupies residues 158–185 (RDSDMDSNPKTTSTEINQKGEAATEEPE). The segment covering 163–174 (DSNPKTTSTEIN) has biased composition (polar residues). The short motif at 194–199 (HVSYLD) is the HXXXXD motif element.

It belongs to the 1-acyl-sn-glycerol-3-phosphate acyltransferase family.

It localises to the endoplasmic reticulum membrane. The catalysed reaction is a 1-acyl-sn-glycero-3-phosphoethanolamine + an acyl-CoA = a 1,2-diacyl-sn-glycero-3-phosphoethanolamine + CoA. The enzyme catalyses a 1-acyl-sn-glycero-3-phosphate + an acyl-CoA = a 1,2-diacyl-sn-glycero-3-phosphate + CoA. It catalyses the reaction a 1-acyl-sn-glycero-3-phosphocholine + an acyl-CoA = a 1,2-diacyl-sn-glycero-3-phosphocholine + CoA. It carries out the reaction a 1-acyl-sn-glycero-3-phospho-L-serine + an acyl-CoA = a 1,2-diacyl-sn-glycero-3-phospho-L-serine + CoA. It functions in the pathway lipid metabolism; phospholipid metabolism. Possesses acyl-CoA-dependent lysophospholipid acyltransferase activity with a subset of lysophospholipids as substrates. Exhibits strong acylation activity on lysophosphatidylethanolamine (LPE) and lysophosphatidate (LPA), and lower activity on lysophosphatidylcholine (LPC) and lysophosphatidylserine (LPS). Exhibits acylation activity on both LPE and LPC. Has a preference for 18:1-LPE over 16:0-LPE as acceptor. Palmitoyl-CoA (16:0-CoA) is a better acyl donor than oleoyl-CoA (18:1-CoA). Among several different acyl-CoA species the best acyl donor is palmitoyl-CoA (16:0-CoA). Activity is calcium-independent. Its activity is essential for maintaining adequate levels of phosphatidylethanolamine (PE), LPE and LPC in the cells, which is crucial for plant growth regulation. The sequence is that of Lysophospholipid acyltransferase LPEAT1 from Arabidopsis thaliana (Mouse-ear cress).